Reading from the N-terminus, the 520-residue chain is NAD(P)H-quinone oxidoreductase subunit 2 (520 aa).

Transmembrane regions (helical) follow at residues 26 to 46 (AVLP…VDLA), 54 to 74 (WSPP…AMQW), 91 to 111 (LAIA…LISW), 120 to 140 (PIGE…LLCG), 144 to 164 (LVSV…LSGY), 179 to 199 (LLVG…LYGI), 220 to 240 (SALA…AVPF), 252 to 272 (PTPV…ALAI), 288 to 308 (LLFT…ALAQ), 314 to 334 (MLAY…VCGT), 342 to 362 (VLYM…IILF), 386 to 406 (LGLS…GFFG), 421 to 441 (LLVT…ISVI), and 474 to 494 (VALI…NPLF).

It belongs to the complex I subunit 2 family. As to quaternary structure, NDH-1 can be composed of about 15 different subunits; different subcomplexes with different compositions have been identified which probably have different functions.

The protein localises to the cellular thylakoid membrane. It carries out the reaction a plastoquinone + NADH + (n+1) H(+)(in) = a plastoquinol + NAD(+) + n H(+)(out). It catalyses the reaction a plastoquinone + NADPH + (n+1) H(+)(in) = a plastoquinol + NADP(+) + n H(+)(out). Functionally, NDH-1 shuttles electrons from an unknown electron donor, via FMN and iron-sulfur (Fe-S) centers, to quinones in the respiratory and/or the photosynthetic chain. The immediate electron acceptor for the enzyme in this species is believed to be plastoquinone. Couples the redox reaction to proton translocation, and thus conserves the redox energy in a proton gradient. Cyanobacterial NDH-1 also plays a role in inorganic carbon-concentration. In Prochlorococcus marinus (strain NATL2A), this protein is NAD(P)H-quinone oxidoreductase subunit 2.